Consider the following 66-residue polypeptide: Cytochrome b-c1 complex subunit 9, mitochondrial (66 aa).

The Mitochondrial matrix portion of the chain corresponds to 2-17 (SFSSLYKTFFKRNAVF). A helical transmembrane segment spans residues 18 to 43 (VGTIFAGAFVFQTVFDTAITSWYENH). Residues 44–66 (NKGKLWKDVKARIAAGDGDDDDE) are Mitochondrial intermembrane-facing.

The protein belongs to the UQCR10/QCR9 family. As to quaternary structure, component of the ubiquinol-cytochrome c oxidoreductase (cytochrome b-c1 complex, complex III, CIII), a multisubunit enzyme composed of 10 subunits. The complex is composed of 3 respiratory subunits cytochrome b (COB), cytochrome c1 (CYT1) and Rieske protein (RIP1), 2 core protein subunits COR1 and QCR2, and 5 low-molecular weight protein subunits QCR6, QCR7, QCR8, QCR9 and QCR10. The complex exists as an obligatory dimer and forms supercomplexes (SCs) in the inner mitochondrial membrane with a monomer or a dimer of cytochrome c oxidase (complex IV, CIV), resulting in 2 different assemblies (supercomplexes III(2)IV and III(2)IV(2)). Interacts with the transmembrane segment of RIP1.

Its subcellular location is the mitochondrion inner membrane. Functionally, component of the ubiquinol-cytochrome c oxidoreductase, a multisubunit transmembrane complex that is part of the mitochondrial electron transport chain which drives oxidative phosphorylation. The respiratory chain contains 3 multisubunit complexes succinate dehydrogenase (complex II, CII), ubiquinol-cytochrome c oxidoreductase (cytochrome b-c1 complex, complex III, CIII) and cytochrome c oxidase (complex IV, CIV), that cooperate to transfer electrons derived from NADH and succinate to molecular oxygen, creating an electrochemical gradient over the inner membrane that drives transmembrane transport and the ATP synthase. The cytochrome b-c1 complex catalyzes electron transfer from ubiquinol to cytochrome c, linking this redox reaction to translocation of protons across the mitochondrial inner membrane, with protons being carried across the membrane as hydrogens on the quinol. In the process called Q cycle, 2 protons are consumed from the matrix, 4 protons are released into the intermembrane space and 2 electrons are passed to cytochrome c. The protein is Cytochrome b-c1 complex subunit 9, mitochondrial (QCR9) of Saccharomyces cerevisiae (strain ATCC 204508 / S288c) (Baker's yeast).